We begin with the raw amino-acid sequence, 57 residues long: DNA-directed RNA polymerase subunit Rpo6 (57 aa).

The protein belongs to the archaeal Rpo6/eukaryotic RPB6 RNA polymerase subunit family. In terms of assembly, part of the RNA polymerase complex.

It is found in the cytoplasm. The protein resides in the chromosome. It catalyses the reaction RNA(n) + a ribonucleoside 5'-triphosphate = RNA(n+1) + diphosphate. Its function is as follows. DNA-dependent RNA polymerase (RNAP) catalyzes the transcription of DNA into RNA using the four ribonucleoside triphosphates as substrates. This is DNA-directed RNA polymerase subunit Rpo6 from Thermococcus kodakarensis (strain ATCC BAA-918 / JCM 12380 / KOD1) (Pyrococcus kodakaraensis (strain KOD1)).